The sequence spans 293 residues: MAAVTSVSFSAITQSAERKSSVSSSRSIDTFRFRSNFSFDSVNVRSSNSTSRFVVHCTSSSAADLPTVADTKLKFLTAYKRPIPTVYNTVLQELIVQQHLTRYKKSYQYDPVFALGFVTVYDQLMEGYPSEEDRNAIFKAYIEALKEDPEQYRADAQKLEEWARTQNANTLVDFSSKEGEIENIFKDIAQRAGTKDGFCYSRLFAVGLFRLLELANVTDPTILEKLCAALNVNKKSVDRDLDVYRNLLSKLVQAKELLKEYVEREKKKRGERETQKANETVTKCLGDYQYAGR.

Residues 1-45 (MAAVTSVSFSAITQSAERKSSVSSSRSIDTFRFRSNFSFDSVNVR) constitute a chloroplast transit peptide. Topologically, residues 46–197 (SSNSTSRFVV…IAQRAGTKDG (152 aa)) are chloroplast intermembrane. The helical transmembrane segment at 198–220 (FCYSRLFAVGLFRLLELANVTDP) threads the bilayer. At 221-293 (TILEKLCAAL…CLGDYQYAGR (73 aa)) the chain is on the cytoplasmic side. Residues 240–273 (DLDVYRNLLSKLVQAKELLKEYVEREKKKRGERE) adopt a coiled-coil conformation.

This sequence belongs to the THF1 family.

The protein localises to the plastid. It localises to the chloroplast outer membrane. It is found in the chloroplast stroma. Functionally, involved in a dynamic process of vesicle-mediated thylakoid membrane biogenesis. Required for the normal organization of vesicles into mature thylakoid stacks and ultimately for leaf development. The polypeptide is Protein THYLAKOID FORMATION1, chloroplastic (THF1) (Solanum tuberosum (Potato)).